The following is a 195-amino-acid chain: U8 snoRNA-decapping enzyme (195 aa).

One can recognise a Nudix hydrolase domain in the interval 18 to 173; it reads GWRHACHALL…IGSAREQLLE (156 aa). The substrate site is built by His24, Arg50, and Phe57. Mn(2+)-binding residues include Gly59, Glu76, Glu80, and His99. The Nudix box signature appears at 61–82; sequence FVDTQDRSLEDGLNRELREELG. Position 170 (Gln170) interacts with substrate. Glu173 contributes to the Mn(2+) binding site.

Belongs to the Nudix hydrolase family. NUDT16 subfamily. Homodimer. Mg(2+) is required as a cofactor. It depends on Mn(2+) as a cofactor. The cofactor is Co(2+). Expressed strongly in lung, kidney, adrenal gland, testis, heart and brain.

It localises to the nucleus. The protein localises to the nucleoplasm. It is found in the nucleolus. The protein resides in the cytoplasm. It carries out the reaction a 5'-end (N(7)-methyl 5'-triphosphoguanosine)-ribonucleoside in mRNA + H2O = N(7)-methyl-GDP + a 5'-end phospho-ribonucleoside in mRNA + 2 H(+). The catalysed reaction is IDP + H2O = IMP + phosphate + H(+). It catalyses the reaction dIDP + H2O = dIMP + phosphate + H(+). The enzyme catalyses a 5'-end NAD(+)-phospho-ribonucleoside in mRNA + H2O = a 5'-end phospho-adenosine-phospho-ribonucleoside in mRNA + beta-nicotinamide D-ribonucleotide + 2 H(+). It carries out the reaction a 5'-end FAD-phospho-ribonucleoside in mRNA + H2O = a 5'-end phospho-adenosine-phospho-ribonucleoside in mRNA + FMN + 2 H(+). The catalysed reaction is a 5'-end CoA-ribonucleoside in mRNA + H2O = a 5'-end phospho-adenosine-phospho-ribonucleoside in mRNA + (R)-4'-phosphopantetheine + 2 H(+). With respect to regulation, the phosphatase activity is inhibited by the product IMP. Its function is as follows. RNA-binding and decapping enzyme that catalyzes the cleavage of the cap structure of snoRNAs and mRNAs in a metal-dependent manner. Part of the U8 snoRNP complex that is required for the accumulation of mature 5.8S and 28S rRNA. Has diphosphatase activity and removes m7G and/or m227G caps from U8 snoRNA and leaves a 5'monophosphate on the RNA. Also catalyzes the cleavage of the cap structure on mRNAs. Does not hydrolyze cap analog structures like 7-methylguanosine nucleoside triphosphate (m7GpppG). Also hydrolysis m7G- and m227G U3-capped RNAs but with less efficiencies. Has broad substrate specificity with manganese or cobalt as cofactor and can act on various RNA species. Binds to the U8 snoRNA; metal is not required for RNA-binding. May play a role in the regulation of snoRNAs and mRNAs degradation. Also acts as a phosphatase; hydrolyzes the non-canonical purine nucleotides inosine diphosphate (IDP) and deoxyinosine diphosphate (dITP) as well as guanosine diphosphate (GDP), deoxyguanosine diphosphate (dGDP), xanthine diphosphate (XDP), inosine triphosphate (ITP) and deoxyinosine triphosphate (ITP) to their respective monophosphate derivatives and does not distinguish between the deoxy- and ribose forms. The order of activity with different substrates is IDP &gt; dIDP &gt;&gt; GDP = dGDP &gt; XDP = ITP = dITP. Binds strongly to GTP, ITP and XTP. Participates in the hydrolysis of dIDP/IDP and probably excludes non-canonical purines from RNA and DNA precursor pools, thus preventing their incorporation into RNA and DNA and avoiding chromosomal lesions. Exhibits decapping activity towards NAD-capped RNAs and FAD-capped RNAs. Exhibits decapping activity towards dpCoA-capped RNAs in vitro. In Homo sapiens (Human), this protein is U8 snoRNA-decapping enzyme (NUDT16).